Here is a 200-residue protein sequence, read N- to C-terminus: Recombination protein RecR (200 aa).

A C4-type zinc finger spans residues Cys-57–Cys-72. A Toprim domain is found at Gly-80–Pro-175.

It belongs to the RecR family.

In terms of biological role, may play a role in DNA repair. It seems to be involved in an RecBC-independent recombinational process of DNA repair. It may act with RecF and RecO. This Marinobacter nauticus (strain ATCC 700491 / DSM 11845 / VT8) (Marinobacter aquaeolei) protein is Recombination protein RecR.